The following is an 803-amino-acid chain: MAKRSSLYIRIVEGKNLPAKDITGSSDPYCIVKVDNEPIIRTATVWKTLCPFWGEEYQVHLPPTFHAVAFYVMDEDALSRDDVIGKVCLTRDTIASHPKGFSGWAHLTEVDPDEEVQGEIHLRLEVWPGARACRLRCSVLEARDLAPKDRNGTSDPFVRVRYKGRTRETSIVKKSCYPRWNETFEFELQEGAMEALCVEAWDWDLVSRNDFLGKVVIDVQRLRVVQQEEGWFRLQPDQSKSRRHDEGNLGSLQLEVRLRDETVLPSSYYQPLVHLLCHEVKLGMQGPGQLIPLIEETTSTECRQDVATNLLKLFLGQGLAKDFLDLLFQLELSRTSETNTLFRSNSLASKSMESFLKVAGMQYLHGVLGPIINKVFEEKKYVELDPSKVEVKDVGCSGLHRPQTEAEVLEQSAQTLRAHLGALLSALSRSVRACPAVVRATFRQLFRRVRERFPGAQHENVPFIAVTSFLCLRFFSPAIMSPKLFHLRERHADARTSRTLLLLAKAVQNVGNMDTPASRAKEAWMEPLQPTVRQGVAQLKDFITKLVDIEEKDELDLQRTLSLQAPPVKEGPLFIHRTKGKGPLMSSSFKKLYFSLTTEALSFAKTPSSKKSALIKLANIRAAEKVEEKSFGGSHVMQVIYTDDAGRPQTAYLQCKCVNELNQWLSALRKVSINNTGLLGSYHPGVFRGDKWSCCHQKEKTGQGCDKTRSRVTLQEWNDPLDHDLEAQLIYRHLLGVEAMLWERHRELSGGAEAGTVPTSPGKVPEDSLARLLRVLQDLREAHSSSPAGSPPSEPNCLLELQT.

C2 domains follow at residues Met-1–Ala-105 and Val-116–Phe-232. Residues Asp-21, Asp-27, Asp-74, Asp-76, Ser-79, Asp-82, Asp-149, Asp-155, Asp-202, Asp-204, Ser-207, and Asp-210 each contribute to the Ca(2+) site. A Ras-GAP domain is found at Gly-318–Leu-546. One can recognise a PH domain in the interval Pro-566–Ile-673. The segment at Asn-675 to Arg-711 adopts a Btk-type zinc-finger fold. Zn(2+) contacts are provided by His-683, Cys-694, Cys-695, and Cys-705. The segment at Glu-781–Thr-803 is disordered.

Requires Ca(2+) as cofactor. In terms of tissue distribution, widely expressed.

The protein resides in the cytoplasm. The protein localises to the cytosol. It is found in the cell membrane. Its function is as follows. Ca(2+)-dependent Ras GTPase-activating protein, that switches off the Ras-MAPK pathway following a stimulus that elevates intracellular calcium. Functions as an adaptor for Cdc42 and Rac1 during FcR-mediated phagocytosis. The sequence is that of Ras GTPase-activating protein 4 (RASA4) from Homo sapiens (Human).